Reading from the N-terminus, the 651-residue chain is DNA ligase (651 aa).

NAD(+) is bound by residues 30 to 34 (DEEYD), 79 to 80 (SM), and glutamate 105. Catalysis depends on lysine 107, which acts as the N6-AMP-lysine intermediate. NAD(+) contacts are provided by arginine 128, glutamate 162, and lysine 301. Zn(2+)-binding residues include cysteine 395, cysteine 398, cysteine 411, and cysteine 416. Residues 570–651 (ALNENISNKT…NALLGGDDEV (82 aa)) form the BRCT domain.

It belongs to the NAD-dependent DNA ligase family. LigA subfamily. The cofactor is Mg(2+). Mn(2+) is required as a cofactor.

The enzyme catalyses NAD(+) + (deoxyribonucleotide)n-3'-hydroxyl + 5'-phospho-(deoxyribonucleotide)m = (deoxyribonucleotide)n+m + AMP + beta-nicotinamide D-nucleotide.. Its function is as follows. DNA ligase that catalyzes the formation of phosphodiester linkages between 5'-phosphoryl and 3'-hydroxyl groups in double-stranded DNA using NAD as a coenzyme and as the energy source for the reaction. It is essential for DNA replication and repair of damaged DNA. The sequence is that of DNA ligase from Campylobacter lari (strain RM2100 / D67 / ATCC BAA-1060).